Reading from the N-terminus, the 922-residue chain is ATP-dependent helicase fft3 (922 aa).

Disordered regions lie at residues 139-177 and 198-224; these read EPKMPSYMDDEEASDSLPLSLSSQSLSSQVTNQKPAPHR and PLSSRKTYEPEADDDSNDDMYSDDDSN. The span at 153–166 shows a compositional bias: low complexity; it reads DSLPLSLSSQSLSS. Residues 207-223 are compositionally biased toward acidic residues; sequence PEADDDSNDDMYSDDDS. Phosphoserine is present on residues Ser213 and Ser219. Residues 399–567 enclose the Helicase ATP-binding domain; it reads YLLYELKLAG…ISLLAFILPH (169 aa). Residue 412–419 participates in ATP binding; it reads DEMGLGKT. The DEGH box signature appears at 518–521; that stretch reads DEGH. Position 617 is a phosphoserine (Ser617). In terms of domain architecture, Helicase C-terminal spans 765-922; that stretch reads KLKKLLTNAV…ETVEAEDDDD (158 aa).

This sequence belongs to the SNF2/RAD54 helicase family. As to quaternary structure, interacts with the GDP-bound form of spi1.

The protein resides in the nucleus. It is found in the chromosome. It carries out the reaction ATP + H2O = ADP + phosphate + H(+). Its function is as follows. DNA helicase that possesses intrinsic ATP-dependent nucleosome-remodeling activity and is required for heterochromatin organization. Required for maintaining a heterochromatin chromatin structure at centromeres and subtelomeres by protecting these regions from euchromatin assembly. Enhances the nucleotide exchange activity of the pim1 guanine nucleotide exchange factor and abolishes histone-H3-mediated RanGAP inhibition. Involved in the construction of the centromeres. In Schizosaccharomyces pombe (strain 972 / ATCC 24843) (Fission yeast), this protein is ATP-dependent helicase fft3 (fft3).